A 276-amino-acid chain; its full sequence is Formamidopyrimidine-DNA glycosylase (276 aa).

The active-site Schiff-base intermediate with DNA is Pro2. The Proton donor role is filled by Glu3. The active-site Proton donor; for beta-elimination activity is Lys58. DNA is bound by residues His92, Arg111, and Lys154. An FPG-type zinc finger spans residues 239-273 (QVYGHVGEECPRCGNIFEKIKVSGRGTTFCPHCQV). Arg263 functions as the Proton donor; for delta-elimination activity in the catalytic mechanism.

This sequence belongs to the FPG family. In terms of assembly, monomer. It depends on Zn(2+) as a cofactor.

It carries out the reaction Hydrolysis of DNA containing ring-opened 7-methylguanine residues, releasing 2,6-diamino-4-hydroxy-5-(N-methyl)formamidopyrimidine.. The enzyme catalyses 2'-deoxyribonucleotide-(2'-deoxyribose 5'-phosphate)-2'-deoxyribonucleotide-DNA = a 3'-end 2'-deoxyribonucleotide-(2,3-dehydro-2,3-deoxyribose 5'-phosphate)-DNA + a 5'-end 5'-phospho-2'-deoxyribonucleoside-DNA + H(+). In terms of biological role, involved in base excision repair of DNA damaged by oxidation or by mutagenic agents. Acts as a DNA glycosylase that recognizes and removes damaged bases. Has a preference for oxidized purines, such as 7,8-dihydro-8-oxoguanine (8-oxoG). Has AP (apurinic/apyrimidinic) lyase activity and introduces nicks in the DNA strand. Cleaves the DNA backbone by beta-delta elimination to generate a single-strand break at the site of the removed base with both 3'- and 5'-phosphates. This is Formamidopyrimidine-DNA glycosylase from Lactobacillus acidophilus (strain ATCC 700396 / NCK56 / N2 / NCFM).